Here is a 238-residue protein sequence, read N- to C-terminus: Chorionic somatomammotropin hormone 2 (238 aa).

Positions 1–36 (MAPAPSFRGHQWTYNPVRGSCLLLLLVVSNLLLCQG) are cleaved as a signal peptide. Zn(2+) is bound at residue His-66. N-linked (GlcNAc...) asparagine glycosylation is found at Asn-70, Asn-92, Asn-146, and Asn-160. Cysteines 97 and 215 form a disulfide. Asp-224 contacts Zn(2+). A disulfide bridge connects residues Cys-232 and Cys-238.

It belongs to the somatotropin/prolactin family.

It localises to the secreted. The sequence is that of Chorionic somatomammotropin hormone 2 (CSH2) from Bos taurus (Bovine).